The chain runs to 419 residues: GTPase Obg (419 aa).

The Obg domain occupies 1 to 156; it reads MFIDKVNTYL…AEVNLELRLI (156 aa). An OBG-type G domain is found at 157-325; the sequence is ADVGLLGLPN…LLKEMLRMLE (169 aa). Residues 163 to 170, 188 to 192, 209 to 212, 279 to 282, and 306 to 308 each bind GTP; these read GLPNAGKS, FTTLA, DIPG, NKID, and SAA. Mg(2+) contacts are provided by Ser-170 and Thr-190. An OCT domain is found at 342-419; sequence KKYIYEPEFK…IGDFEFTFEK (78 aa).

This sequence belongs to the TRAFAC class OBG-HflX-like GTPase superfamily. OBG GTPase family. In terms of assembly, monomer. Mg(2+) is required as a cofactor.

The protein localises to the cytoplasm. Functionally, an essential GTPase which binds GTP, GDP and possibly (p)ppGpp with moderate affinity, with high nucleotide exchange rates and a fairly low GTP hydrolysis rate. Plays a role in control of the cell cycle, stress response, ribosome biogenesis and in those bacteria that undergo differentiation, in morphogenesis control. This Endomicrobium trichonymphae protein is GTPase Obg.